We begin with the raw amino-acid sequence, 104 residues long: ESAT-6-like protein (104 aa).

Residues Met12–His43 adopt a coiled-coil conformation.

It belongs to the WXG100 family. CFP-10 subfamily. In terms of assembly, in isolation forms a homodimer. Forms a tight 1:1 complex with EsxA. Forms a complex with EsxA and EccC, probably wholly mediated by EsxB; binds in a pocket in the third FtsK (ATPase) domain of EccC (residues 1163-1208).

The protein localises to the secreted. May help regulate assembly and function of the type VII secretion system (T7SS). Binds to EccC and induces its multimerization. May serve as a chaperone for EsxA. The protein is ESAT-6-like protein of Thermomonospora curvata (strain ATCC 19995 / DSM 43183 / JCM 3096 / KCTC 9072 / NBRC 15933 / NCIMB 10081 / Henssen B9).